Consider the following 476-residue polypeptide: Adenylyl cyclase-associated protein 2 (476 aa).

The interval 223–322 (SILSSGPGLP…KSNSPQKHTP (100 aa)) is disordered. The span at 230–247 (GLPPPPPPPPPPGPPPPF) shows a compositional bias: pro residues. Residues 288-299 (KNPSLRAQGQIR) are compositionally biased toward polar residues. A phosphoserine mark is found at serine 300 and serine 308. Low complexity predominate over residues 300-317 (SPTKTHTPSPTSPKSNSP). A C-CAP/cofactor C-like domain is found at 317-454 (PQKHTPVLEL…QDDDYREFPI (138 aa)).

The protein belongs to the CAP family. In terms of tissue distribution, expressed in the heart, skeletal muscle, and brain.

It localises to the cell membrane. In terms of biological role, involved in the regulation of actin polymerization. This Mus musculus (Mouse) protein is Adenylyl cyclase-associated protein 2 (Cap2).